Here is a 205-residue protein sequence, read N- to C-terminus: Guanylate kinase (205 aa).

Residues 6 to 185 enclose the Guanylate kinase-like domain; it reads GLLIVLSGPS…ACERIKAIVV (180 aa). Residue 13–20 coordinates ATP; it reads GPSGVGKG.

This sequence belongs to the guanylate kinase family.

It localises to the cytoplasm. The catalysed reaction is GMP + ATP = GDP + ADP. In terms of biological role, essential for recycling GMP and indirectly, cGMP. This chain is Guanylate kinase, found in Bacillus anthracis.